The following is a 642-amino-acid chain: Threonine--tRNA ligase (642 aa).

Residues 1-58 (MQVAGKELEVQQGALCGEVLKEALSKKQFKNVVVAKCGDTLLDLTTTVPADCTDLEPV) form the TGS domain. The tract at residues 239 to 530 (DHRKLGTQLD…LLEHTGGALP (292 aa)) is catalytic. Positions 331, 382, and 507 each coordinate Zn(2+).

This sequence belongs to the class-II aminoacyl-tRNA synthetase family. Homodimer. The cofactor is Zn(2+).

The protein localises to the cytoplasm. It carries out the reaction tRNA(Thr) + L-threonine + ATP = L-threonyl-tRNA(Thr) + AMP + diphosphate + H(+). Its function is as follows. Catalyzes the attachment of threonine to tRNA(Thr) in a two-step reaction: L-threonine is first activated by ATP to form Thr-AMP and then transferred to the acceptor end of tRNA(Thr). Also edits incorrectly charged L-seryl-tRNA(Thr). The chain is Threonine--tRNA ligase from Maridesulfovibrio salexigens (strain ATCC 14822 / DSM 2638 / NCIMB 8403 / VKM B-1763) (Desulfovibrio salexigens).